The chain runs to 509 residues: Scavenger receptor class B member 1 (509 aa).

The Cytoplasmic segment spans residues 1–11; the sequence is MGNLSRARRVT. Residues 12–32 form a helical membrane-spanning segment; sequence AALGFIGLLFAVLGIIMIVMV. Residues 33 to 440 are Extracellular-facing; it reads PSIIKQQVLK…YIQLVLMPKV (408 aa). N-linked (GlcNAc...) asparagine glycans are attached at residues Asn-102, Asn-108, Asn-173, Asn-212, Asn-227, Asn-255, Asn-310, Asn-330, and Asn-383. A disulfide bridge connects residues Cys-251 and Cys-384. The chain crosses the membrane as a helical span at residues 441 to 461; that stretch reads LHYAQYVLLALGCVLLLIPII. Over 462-509 the chain is Cytoplasmic; sequence YQIRSQEKCYLFWISFKKGSKDKEAVQAYSEFLMTSAPKGTVLQEARL.

The protein belongs to the CD36 family. In terms of processing, N-glycosylated. The six cysteines of the extracellular domain are all involved in intramolecular disulfide bonds.

It is found in the cell membrane. Its subcellular location is the membrane. The protein resides in the caveola. Receptor for different ligands such as phospholipids, cholesterol ester, lipoproteins, phosphatidylserine and apoptotic cells. Receptor for HDL, mediating selective uptake of cholesteryl ether and HDL-dependent cholesterol efflux. Also facilitates the flux of free and esterified cholesterol between the cell surface and apoB-containing lipoproteins and modified lipoproteins, although less efficiently than HDL. May be involved in the phagocytosis of apoptotic cells, via its phosphatidylserine binding activity. This is Scavenger receptor class B member 1 (SCARB1) from Bos taurus (Bovine).